Consider the following 221-residue polypeptide: MERNTCMILALDVTDREEALKIAEDVWEFVDAIKVGYPLILATGLGIIRELAEFAPVIADFKVADIPNTNRLICDQVFEAGADAVIAQGFTGRDSLDACIEIASEYRKDVFVVSEMSHPGGADFMQPVAEAIAKMALEAGAFGLVAPATRPKRVKKIRRIIGDKLTIISPGVGAQGGKASDVIAAGADWVIVGRSIYKAESPKEAARQIAEEIQAELRGEY.

Residues Asp-12, Lys-34, 60–69 (DFKVADIPNT), Ser-117, 170–180 (PGVGAQGGKAS), Gly-193, and Arg-194 contribute to the substrate site. Residue Lys-62 is the Proton donor of the active site.

Belongs to the OMP decarboxylase family. Type 1 subfamily. As to quaternary structure, homodimer.

It catalyses the reaction orotidine 5'-phosphate + H(+) = UMP + CO2. It functions in the pathway pyrimidine metabolism; UMP biosynthesis via de novo pathway; UMP from orotate: step 2/2. Catalyzes the decarboxylation of orotidine 5'-monophosphate (OMP) to uridine 5'-monophosphate (UMP). This is Orotidine 5'-phosphate decarboxylase from Methanosarcina acetivorans (strain ATCC 35395 / DSM 2834 / JCM 12185 / C2A).